The primary structure comprises 84 residues: Large ribosomal subunit protein bL31 (84 aa).

Disordered stretches follow at residues 1–41 (MQHD…DSTN) and 63–84 (RRYG…AADE). Residues 21-30 (EITTRSTMET) show a composition bias toward polar residues. Residues 68-84 (TDDDEGDDEETEDAADE) show a composition bias toward acidic residues.

This sequence belongs to the bacterial ribosomal protein bL31 family. Type A subfamily. Part of the 50S ribosomal subunit.

Binds the 23S rRNA. This Salinibacter ruber (strain DSM 13855 / M31) protein is Large ribosomal subunit protein bL31.